A 518-amino-acid chain; its full sequence is Phytoene desaturase (neurosporene-forming) (518 aa).

14–47 (LVIGSGLGGLAAAMRLGAKGWRVTVIDKLDVPGG) contributes to the FAD binding site.

It belongs to the carotenoid/retinoid oxidoreductase family. FAD serves as cofactor.

It catalyses the reaction 15-cis-phytoene + 3 A = all-trans-neurosporene + 3 AH2. It participates in carotenoid biosynthesis. Functionally, converts phytoene into all-trans-neurosporene as the major product, via the intermediary of phytofluene and zeta-carotene, by the introduction of three double bonds. The polypeptide is Phytoene desaturase (neurosporene-forming) (crtI) (Cereibacter sphaeroides (strain ATCC 17023 / DSM 158 / JCM 6121 / CCUG 31486 / LMG 2827 / NBRC 12203 / NCIMB 8253 / ATH 2.4.1.) (Rhodobacter sphaeroides)).